The primary structure comprises 340 residues: MKEDQVVQEESGFQDDEESLFQDIDLLQKHGINMADIKKLKSVGICTIKGIQMTTRRALCNVKGLSEAKVEKIKEAANKLIEPGFLTAFQYSERRKMVFHITTGSQEFDKLLGGGIESMAITEAFGEFRTGKTQLSHTLCVTAQLPGTGGYSGGKIIFIDTENTFRPDRLRDIADRFNVDHEAVLDNVLYARAYTSEHQMELLDYVAAKFHEEAGIFKLLIIDSIMALFRVDFSGRGELAERQQKLAQMLSRLQKISEEYNVAVFVTNQMTADPGATMTFQADPKKPIGGHILAHASTTRISLRKGRGELRIAKIYDSPEMPENEATFAITAGGIGDAKE.

Residue 126 to 133 coordinates ATP; that stretch reads GEFRTGKT. Residue Arg-230 coordinates dsDNA. SsDNA is bound by residues Arg-230, Phe-233, Arg-236, Arg-242, and Arg-311. 2 residues coordinate dsDNA: Arg-236 and Arg-242.

It belongs to the RecA family. DMC1 subfamily. Double stacked ring-shaped homooctamer. Interacts with BRCA2. Interacts with the MND1-PSMC3IP heterodimer. Interacts with RAD51AP1; the interaction is direct and stimulates DMC1-mediated homologous recombination. In terms of tissue distribution, testis.

The protein resides in the nucleus. It is found in the chromosome. Functionally, participates in meiotic recombination, specifically in homologous strand assimilation, which is required for the resolution of meiotic double-strand breaks. The polypeptide is Meiotic recombination protein DMC1/LIM15 homolog (Mus musculus (Mouse)).